The primary structure comprises 145 residues: Large ribosomal subunit protein uL15 (145 aa).

Residues 1-11 (MELHSLKSTPG) show a composition bias toward polar residues. A disordered region spans residues 1–48 (MELHSLKSTPGSRKEKHRKGRGHAAGKGKQAGKGQSGQRKRSKVRLGF). Positions 14–26 (KEKHRKGRGHAAG) are enriched in basic residues.

The protein belongs to the universal ribosomal protein uL15 family. Part of the 50S ribosomal subunit.

Binds to the 23S rRNA. The polypeptide is Large ribosomal subunit protein uL15 (Mycoplasmopsis pulmonis (strain UAB CTIP) (Mycoplasma pulmonis)).